The following is a 592-amino-acid chain: PiggyBac transposable element-derived protein 2 (592 aa).

The disordered stretch occupies residues 31-69; the sequence is EEEESNNNREEIFIAPPDNAAGEFTDEDSGDEDSQRGAH.

The chain is PiggyBac transposable element-derived protein 2 (PGBD2) from Homo sapiens (Human).